The primary structure comprises 432 residues: Adenylosuccinate synthetase (432 aa).

Residues 13–19 (GDEGKGK) and 41–43 (GHT) each bind GTP. The active-site Proton acceptor is the D14. Mg(2+) contacts are provided by D14 and G41. IMP-binding positions include 14 to 17 (DEGK), 39 to 42 (NAGH), T130, R144, Q225, T240, and R304. H42 functions as the Proton donor in the catalytic mechanism. 300–306 (ATTGRRR) serves as a coordination point for substrate. Residues R306, 332-334 (KLD), and 415-417 (STG) each bind GTP.

This sequence belongs to the adenylosuccinate synthetase family. In terms of assembly, homodimer. The cofactor is Mg(2+).

It is found in the cytoplasm. It catalyses the reaction IMP + L-aspartate + GTP = N(6)-(1,2-dicarboxyethyl)-AMP + GDP + phosphate + 2 H(+). Its pathway is purine metabolism; AMP biosynthesis via de novo pathway; AMP from IMP: step 1/2. Its function is as follows. Plays an important role in the de novo pathway of purine nucleotide biosynthesis. Catalyzes the first committed step in the biosynthesis of AMP from IMP. In Escherichia coli (strain K12), this protein is Adenylosuccinate synthetase.